The primary structure comprises 347 residues: Protein RecA (347 aa).

66 to 73 contributes to the ATP binding site; sequence GPESSGKT.

This sequence belongs to the RecA family.

It is found in the cytoplasm. Can catalyze the hydrolysis of ATP in the presence of single-stranded DNA, the ATP-dependent uptake of single-stranded DNA by duplex DNA, and the ATP-dependent hybridization of homologous single-stranded DNAs. It interacts with LexA causing its activation and leading to its autocatalytic cleavage. This chain is Protein RecA, found in Methylococcus capsulatus (strain ATCC 33009 / NCIMB 11132 / Bath).